The following is a 55-amino-acid chain: Large ribosomal subunit protein bL33 (55 aa).

The protein belongs to the bacterial ribosomal protein bL33 family.

This is Large ribosomal subunit protein bL33 from Methylacidiphilum infernorum (isolate V4) (Methylokorus infernorum (strain V4)).